A 179-amino-acid chain; its full sequence is DELTA-actitoxin-Afr1a (179 aa).

Positions 1–29 are N-terminal alpha-helix that contributes to the pore; it reads SADVAGAVIDGAGLGFDVLKTVLEALGNV. Arg31 is an an N-(acyl)-sphingosylphosphocholine binding site. N-acetyl-D-glucosamine 6-sulfate contacts are provided by Tyr51 and Arg53. 13 residues coordinate an N-(acyl)-sphingosylphosphocholine: Arg53, Ser54, Arg79, Gly85, Tyr108, Tyr113, Ser114, Trp116, Tyr133, Tyr137, Tyr138, Arg144, and Gly168. The tract at residues 105–120 is trp-rich region, which is important for the binding to lipid membrane; the sequence is SVPYDYNWYSNWWNVR. Residue Tyr138 participates in N-acetyl-D-glucosamine 6-sulfate binding. Positions 144-146 match the Cell attachment site, crucial for protein stability motif; sequence RGD.

This sequence belongs to the actinoporin family. Sea anemone subfamily. In terms of assembly, octamer or nonamer in membranes. Monomer in the soluble state.

The protein localises to the secreted. It is found in the nematocyst. The protein resides in the target cell membrane. Its function is as follows. Pore-forming toxin (PFT) that consists of a crown-shaped octamer or nonamer that forms cation-selective hydrophilic pores of about 1.5 nm (inside) and 13 nm (outside). It causes cardiac stimulation and cytolysis (EC(50)=1.6 nM on erythrocytes). Interestingly, the Phe-16 is crucial for hemolysis. Pore formation is a multi-step process that involves specific recognition of membrane sphingomyelin (but neither cholesterol nor phosphatidylcholine) using aromatic rich region and adjacent phosphocholine (POC) binding site, firm binding to the membrane (mainly driven by hydrophobic interactions) accompanied by the transfer of the N-terminal region to the lipid-water interface and finally pore formation after oligomerization of monomers. It is probable that a dimeric form is an assembly intermediate before the complete oligomerization. The formation of stable pores occurs only in vesicles composed of DOPC/SM (there is no oligomerization when the PFT is treated with vesicles of DOPC or SM alone). The transmembrane pore displays 8 lateral perforations, one at each subunit-subunit interface, partially occupied by the acyl-chain region of a bridging lipid. Each pore contains 24 lipid molecules, firmly bound to each subunit, that is, 3 lipids (L1, L2, L3, L4 and/or L5) are associated to each subunit. Lipid L1 bridges 2 subunits, whereas lipids L2 and L3 bind to sites at single subunit. The sequence is that of DELTA-actitoxin-Afr1a from Actinia fragacea (Strawberry anemone).